Reading from the N-terminus, the 668-residue chain is Probable serine/threonine-protein kinase abkB (668 aa).

Disordered stretches follow at residues 88–111 (YTNI…KTTA) and 132–162 (EVEE…DDNK). Over residues 91-105 (IGGTSPNRQSVPENS) the composition is skewed to polar residues. Residues 131–163 (KEVEEEIIDKNERGKEQEQENKQQKEQKDDNKS) adopt a coiled-coil conformation. A compositionally biased stretch (basic and acidic residues) spans 138–162 (IDKNERGKEQEQENKQQKEQKDDNK). Positions 314–668 (DFERLPINSA…EIPSTYHHHH (355 aa)) constitute a Protein kinase domain. ATP is bound by residues 320–328 (INSASLAQV) and Lys346. Asp478 (proton acceptor) is an active-site residue.

The protein belongs to the protein kinase superfamily. ADCK protein kinase family.

The polypeptide is Probable serine/threonine-protein kinase abkB (abkB) (Dictyostelium discoideum (Social amoeba)).